A 224-amino-acid polypeptide reads, in one-letter code: Ribonuclease T (224 aa).

Residues valine 20–phenylalanine 194 form the Exonuclease domain. Residues aspartate 23, glutamate 25, histidine 181, and aspartate 186 each coordinate Mg(2+). Histidine 181 acts as the Proton donor/acceptor in catalysis.

The protein belongs to the RNase T family. In terms of assembly, homodimer. Requires Mg(2+) as cofactor.

Its function is as follows. Trims short 3' overhangs of a variety of RNA species, leaving a one or two nucleotide 3' overhang. Responsible for the end-turnover of tRNA: specifically removes the terminal AMP residue from uncharged tRNA (tRNA-C-C-A). Also appears to be involved in tRNA biosynthesis. This chain is Ribonuclease T, found in Shewanella putrefaciens (strain CN-32 / ATCC BAA-453).